The primary structure comprises 454 residues: Putative serine carboxypeptidase-like 23 (454 aa).

The signal sequence occupies residues 1–22 (MARIHLIIILLVISSTSSSSSS). N-linked (GlcNAc...) asparagine glycans are attached at residues Asn-52, Asn-102, and Asn-136. Intrachain disulfides connect Cys-85–Cys-338, Cys-247–Cys-258, and Cys-282–Cys-306. Ser-178 is a catalytic residue. Asn-287 and Asn-327 each carry an N-linked (GlcNAc...) asparagine glycan. Residues Asp-375 and His-427 contribute to the active site.

Belongs to the peptidase S10 family. In terms of tissue distribution, expression not detected.

Its subcellular location is the secreted. Its function is as follows. Probable carboxypeptidase. This is Putative serine carboxypeptidase-like 23 (SCPL23) from Arabidopsis thaliana (Mouse-ear cress).